A 130-amino-acid chain; its full sequence is Small ribosomal subunit protein uS9 (130 aa).

This sequence belongs to the universal ribosomal protein uS9 family.

The chain is Small ribosomal subunit protein uS9 from Salmonella paratyphi C (strain RKS4594).